The following is a 44-amino-acid chain: Poly-ADP-ribosylation-amplifying and CtIP-maintaining micropeptide (44 aa).

Residues 1 to 44 (MAASGGTKKAQSGGRRLREPSSRPSRRARQRPRRGALRKAGRFL) form a disordered region. Positions 24-44 (PSRRARQRPRRGALRKAGRFL) are enriched in basic residues.

As to quaternary structure, interacts with KLHL15; preventing ubiquitination and degradation of RBBP8/CtIP. Interacts with PARP1.

The protein resides in the nucleus. It localises to the nucleolus. Its subcellular location is the chromosome. In terms of biological role, micropeptide that acts as a regulator of DNA repair both by preventing KLHL15-mediated ubiquitination and degradation of RBBP8/CtIP, and by promoting the poly-ADP-ribosyltransferase activity of PARP1. Prevents KLHL15-mediated ubiquitination of RBBP8/CtIP by competitively blocking the association between KLHL15 and RBBP8/CtIP. Recruited to DNA damage sites via association with poly-ADP-ribose chains, and enhances the poly-ADP-ribosyltransferase activity of PARP1. The sequence is that of Poly-ADP-ribosylation-amplifying and CtIP-maintaining micropeptide from Homo sapiens (Human).